A 468-amino-acid polypeptide reads, in one-letter code: Probable Xaa-Pro aminopeptidase pepP (468 aa).

Positions 265, 276, 399, and 439 each coordinate Mn(2+).

The protein belongs to the peptidase M24B family. It depends on Mn(2+) as a cofactor.

The enzyme catalyses Release of any N-terminal amino acid, including proline, that is linked to proline, even from a dipeptide or tripeptide.. Its function is as follows. Catalyzes the removal of a penultimate prolyl residue from the N-termini of peptides. The chain is Probable Xaa-Pro aminopeptidase pepP (pepP) from Aspergillus fumigatus (strain CBS 144.89 / FGSC A1163 / CEA10) (Neosartorya fumigata).